Consider the following 166-residue polypeptide: MSEAIIAKKAELVDVVAEKMKAAASIVVVDARGLTVEQDTVLRRELRGSEVEYKVIKNSILRRAAEKAGLEDLASVFVGPSAVAFSNEDVIAPAKILNDFAKNADALEIKGGAIEGAVASKEEILALATLPNREGLLSMLLSVLQAPVRNVALAVKAVADNKEDAA.

This sequence belongs to the universal ribosomal protein uL10 family. As to quaternary structure, part of the ribosomal stalk of the 50S ribosomal subunit. The N-terminus interacts with L11 and the large rRNA to form the base of the stalk. The C-terminus forms an elongated spine to which L12 dimers bind in a sequential fashion forming a multimeric L10(L12)X complex.

Forms part of the ribosomal stalk, playing a central role in the interaction of the ribosome with GTP-bound translation factors. This is Large ribosomal subunit protein uL10 from Streptococcus gordonii (strain Challis / ATCC 35105 / BCRC 15272 / CH1 / DL1 / V288).